A 453-amino-acid polypeptide reads, in one-letter code: Keratin, type I cytoskeletal 15 (453 aa).

Residues 1 to 102 (MATTLLQTSS…GGDGGLLSGN (102 aa)) form a head region. 5 positions are modified to phosphoserine: S16, S17, S34, S48, and S56. A coil 1A region spans residues 103–138 (EKITMQNLNDRLASYLEKVRALEEANADLEVKIRDW). The IF rod domain maps to 103 to 415 (EKITMQNLND…SLLEGQDARM (313 aa)). Residues 139–157 (YQRQSPTSPERDYSPYFKT) are linker 1. The segment at 158–249 (TDELRDKILA…KNHEEEMKEF (92 aa)) is coil 1B. Residues 250-269 (SNQLAGQVNVEMDAAPGVDL) form a linker 12 region. Residues 270-411 (TRVLSEMREQ…ATYHSLLEGQ (142 aa)) form a coil 2 region. K298 is covalently cross-linked (Glycyl lysine isopeptide (Lys-Gly) (interchain with G-Cter in SUMO2)). 2 positions are modified to phosphothreonine: T299 and T321. The tail stretch occupies residues 412–453 (DARMAGIGTGEASLGGGGGGKVRINVEESVDGKVVSSRKREI). K444 participates in a covalent cross-link: Glycyl lysine isopeptide (Lys-Gly) (interchain with G-Cter in SUMO1); alternate. A Glycyl lysine isopeptide (Lys-Gly) (interchain with G-Cter in SUMO2); alternate cross-link involves residue K444.

Belongs to the intermediate filament family. In terms of assembly, heterotetramer of two type I and two type II keratins. Interacts with NOD2. In terms of tissue distribution, expressed in the basal cell layers of several stratified epithelia including esophagus, tongue, stomach, epidermis and hair follicle. In the hair follicle, expression is detected mainly in the basal layer of the outer root sheath (ORS), except just above the follicle bulb where it occurs throughout its thickness. Low expression levels are seen in the single layer of ORS cells around the base of the follicle which increases in the palisade-like cells of the bulb. Also expressed in the basal cells of the sebaceous glands, and expression in the epidermis occurs in a punctate pattern.

In Ovis aries (Sheep), this protein is Keratin, type I cytoskeletal 15.